The sequence spans 390 residues: Cold-responsive protein kinase 1 (390 aa).

The region spanning 41–320 (FSAENKIGEG…VRLLTGEKDI (280 aa)) is the Protein kinase domain. ATP is bound by residues 47–55 (IGEGGFGSV) and K69. Y114 carries the phosphotyrosine modification. Catalysis depends on D169, which acts as the Proton acceptor. Residues S173 and S202 each carry the phosphoserine modification. T203 and T208 each carry phosphothreonine. Phosphotyrosine is present on Y216. The interval 345–390 (TKTEQVNRQNYTNPSSSSNGSSRDHSNAYSSGASSANAGNTFSSTI) is disordered. Over residues 354 to 390 (NYTNPSSSSNGSSRDHSNAYSSGASSANAGNTFSSTI) the composition is skewed to low complexity.

The protein belongs to the protein kinase superfamily. Ser/Thr protein kinase family. In terms of assembly, interacts with and phosphorylates 14-3-3 proteins. Binds to GRF6 at the plasma membrane. In terms of processing, autophosphorylated.

The protein localises to the cell membrane. The enzyme catalyses L-seryl-[protein] + ATP = O-phospho-L-seryl-[protein] + ADP + H(+). It carries out the reaction L-threonyl-[protein] + ATP = O-phospho-L-threonyl-[protein] + ADP + H(+). Activated by cold. Functionally, negative regulator of freezing tolerance that phosphorylates 14-3-3 proteins (e.g. GRF6) thus triggering their translocation from the cytosol to the nucleus in response to cold stress. This Arabidopsis thaliana (Mouse-ear cress) protein is Cold-responsive protein kinase 1.